The following is a 340-amino-acid chain: Polyporopepsin (340 aa).

In terms of domain architecture, Peptidase A1 spans 14–330 (YVVNVGVGSP…DTTNKRLGLA (317 aa)). Aspartate 32 is an active-site residue. A glycan (N-linked (GlcNAc...) asparagine) is linked at asparagine 192. Aspartate 212 is a catalytic residue. N-linked (GlcNAc...) asparagine glycosylation occurs at asparagine 238.

It belongs to the peptidase A1 family.

The catalysed reaction is Milk clotting activity, broad specificity, but fails to cleave 15-Leu-|-Tyr-16 or 16-Tyr-|-Leu-17 of insulin B chain.. In Irpex lacteus (Milk-white toothed polypore), this protein is Polyporopepsin.